A 157-amino-acid chain; its full sequence is SsrA-binding protein (157 aa).

A compositionally biased stretch (basic and acidic residues) spans His-134 to Arg-151. The tract at residues His-134–Gly-157 is disordered.

This sequence belongs to the SmpB family.

Its subcellular location is the cytoplasm. In terms of biological role, required for rescue of stalled ribosomes mediated by trans-translation. Binds to transfer-messenger RNA (tmRNA), required for stable association of tmRNA with ribosomes. tmRNA and SmpB together mimic tRNA shape, replacing the anticodon stem-loop with SmpB. tmRNA is encoded by the ssrA gene; the 2 termini fold to resemble tRNA(Ala) and it encodes a 'tag peptide', a short internal open reading frame. During trans-translation Ala-aminoacylated tmRNA acts like a tRNA, entering the A-site of stalled ribosomes, displacing the stalled mRNA. The ribosome then switches to translate the ORF on the tmRNA; the nascent peptide is terminated with the 'tag peptide' encoded by the tmRNA and targeted for degradation. The ribosome is freed to recommence translation, which seems to be the essential function of trans-translation. This Rhodopseudomonas palustris (strain BisA53) protein is SsrA-binding protein.